Here is a 427-residue protein sequence, read N- to C-terminus: BTB/POZ domain-containing protein KCTD16 (427 aa).

The 74-residue stretch at 25–98 folds into the BTB domain; it reads EVIELNVGGQ…LRDRQVVLPD (74 aa). Residue Tyr112 is modified to Phosphotyrosine. Phosphoserine occurs at positions 130, 137, 143, and 146.

As to quaternary structure, homopentamer; forms an open pentamer. In contrast to other BTB domain-containing proteins, does not interact with CUL3. Interacts as a tetramer with GABBR1 and GABBR2. As to expression, expressed in the brain, mainly in the hippocampus.

The protein resides in the presynaptic cell membrane. It localises to the postsynaptic cell membrane. Functionally, auxiliary subunit of GABA-B receptors that determine the pharmacology and kinetics of the receptor response. Increases agonist potency and markedly alter the G-protein signaling of the receptors by accelerating onset and promoting desensitization. The sequence is that of BTB/POZ domain-containing protein KCTD16 (Kctd16) from Mus musculus (Mouse).